Here is a 199-residue protein sequence, read N- to C-terminus: Recombination protein RecR (199 aa).

A C4-type zinc finger spans residues 57 to 72; sequence CQSCRTYTEESLCPIC. Residues 81-176 enclose the Toprim domain; sequence STICVVETPA…VISRIAHGVP (96 aa).

Belongs to the RecR family.

Functionally, may play a role in DNA repair. It seems to be involved in an RecBC-independent recombinational process of DNA repair. It may act with RecF and RecO. In Shewanella sp. (strain ANA-3), this protein is Recombination protein RecR.